A 480-amino-acid chain; its full sequence is Glycogen synthase 1 (480 aa).

K15 is an ADP-alpha-D-glucose binding site.

The protein belongs to the glycosyltransferase 1 family. Bacterial/plant glycogen synthase subfamily.

The catalysed reaction is [(1-&gt;4)-alpha-D-glucosyl](n) + ADP-alpha-D-glucose = [(1-&gt;4)-alpha-D-glucosyl](n+1) + ADP + H(+). It participates in glycan biosynthesis; glycogen biosynthesis. Functionally, synthesizes alpha-1,4-glucan chains using ADP-glucose. This chain is Glycogen synthase 1 (glgA1), found in Rhizobium radiobacter (Agrobacterium tumefaciens).